Consider the following 1285-residue polypeptide: Ataxin-2 (1285 aa).

3 disordered regions span residues M1–R85, A111–A178, and P197–Q224. A compositionally biased stretch (basic residues) spans S29–G38. Residues A48 to P65 are compositionally biased toward pro residues. Over residues S128–P144 the composition is skewed to low complexity. Gly residues predominate over residues A205 to R214. Phosphoserine is present on residues S218 and S219. Residues R237–D314 form the Sm domain. S362 and S435 each carry phosphoserine. Composition is skewed to basic and acidic residues over residues A428–Y440 and C447–K461. Disordered stretches follow at residues A428–P925 and A1111–F1191. Phosphoserine is present on S477. Residues A498 to S510 show a composition bias toward polar residues. A Phosphoserine modification is found at S523. Over residues P526–R552 the composition is skewed to low complexity. Over residues P554–H567 the composition is skewed to pro residues. At S593 the chain carries Phosphoserine. Residues A596–S606 show a composition bias toward basic residues. R609 is subject to Asymmetric dimethylarginine; alternate. R609 bears the Omega-N-methylarginine; alternate mark. A phosphoserine mark is found at S611 and S653. Polar residues predominate over residues P662 to S672. A compositionally biased stretch (low complexity) spans P685–P694. The residue at position 697 (S697) is a Phosphoserine. T710 bears the Phosphothreonine mark. Residues A737–K746 are compositionally biased toward polar residues. Phosphoserine is present on residues S741 and S753. Positions S757 to F773 are enriched in basic and acidic residues. The span at Q776–S789 shows a compositional bias: polar residues. A compositionally biased stretch (basic and acidic residues) spans K790 to F813. The span at I814 to S838 shows a compositional bias: low complexity. S827, S828, S832, S836, S838, S859, and S860 each carry phosphoserine. Over residues V851 to A862 the composition is skewed to polar residues. A Glycyl lysine isopeptide (Lys-Gly) (interchain with G-Cter in SUMO2) cross-link involves residue K864. Residues K864–R881 are compositionally biased toward basic and acidic residues. Composition is skewed to low complexity over residues S896 to T907 and G1128 to A1165.

Belongs to the ataxin-2 family. Interacts with RBFOX1. Monomer. Can also form homodimers. Interacts with polyribosomes. Interacts with EGFR. Interacts with SH3GL3. Interacts with SH3GL2, SH3KBP1 and CBL. Interacts with ATXN2L. In terms of tissue distribution, expressed in the heart, lung, liver, kidney, skeletal muscle, spleen and intestine. Predominant expression was seen in the brain where a high level expression was found in the pyramidal cortical neurons, large brain stem neurons and cerebellar Purkinje cells. All three isoforms were found in all the tissues except skeletal muscle where only isoform 1 was found.

The protein localises to the cytoplasm. Functionally, involved in EGFR trafficking, acting as negative regulator of endocytic EGFR internalization at the plasma membrane. In Mus musculus (Mouse), this protein is Ataxin-2 (Atxn2).